The chain runs to 129 residues: Small ribosomal subunit protein uS9 (129 aa).

The protein belongs to the universal ribosomal protein uS9 family.

This chain is Small ribosomal subunit protein uS9, found in Chlorobium limicola (strain DSM 245 / NBRC 103803 / 6330).